A 47-amino-acid chain; its full sequence is Protein YqhI (47 aa).

The sequence is that of Protein YqhI from Escherichia coli (strain K12).